A 213-amino-acid polypeptide reads, in one-letter code: Uridine kinase (213 aa).

Residue 14 to 21 (GASASGKS) coordinates ATP.

It belongs to the uridine kinase family.

The protein localises to the cytoplasm. It catalyses the reaction uridine + ATP = UMP + ADP + H(+). The catalysed reaction is cytidine + ATP = CMP + ADP + H(+). It participates in pyrimidine metabolism; CTP biosynthesis via salvage pathway; CTP from cytidine: step 1/3. It functions in the pathway pyrimidine metabolism; UMP biosynthesis via salvage pathway; UMP from uridine: step 1/1. The sequence is that of Uridine kinase from Vibrio cholerae serotype O1 (strain ATCC 39315 / El Tor Inaba N16961).